Here is a 373-residue protein sequence, read N- to C-terminus: Enoyl-[acyl-carrier-protein] reductase, mitochondrial (373 aa).

A mitochondrion-targeting transit peptide spans 1 to 53 (MWVCGALCRTRAPAQLGQRLLPESRRRRPASASFSASAEPSRVRALVYGHHGD). K61 is modified (N6-acetyllysine; alternate). N6-succinyllysine; alternate is present on K61. The active-site Proton donor is the Y94. Residues N167, 193 to 196 (NSGV), and 216 to 218 (RDT) each bind NADP(+). An N6-acetyllysine; alternate mark is found at K252 and K267. N6-succinyllysine; alternate is present on residues K252 and K267. NADP(+) is bound by residues 285–288 (YGGM) and 310–312 (FWL). At K316 the chain carries N6-succinyllysine. K368 provides a ligand contact to NADP(+).

Belongs to the zinc-containing alcohol dehydrogenase family. Quinone oxidoreductase subfamily. Homodimer.

It is found in the mitochondrion. It carries out the reaction a 2,3-saturated acyl-[ACP] + NADP(+) = a (2E)-enoyl-[ACP] + NADPH + H(+). The catalysed reaction is (2E)-butenoyl-[ACP] + NADPH + H(+) = butanoyl-[ACP] + NADP(+). It catalyses the reaction (2E)-hexenoyl-[ACP] + NADPH + H(+) = hexanoyl-[ACP] + NADP(+). The enzyme catalyses (2E)-octenoyl-[ACP] + NADPH + H(+) = octanoyl-[ACP] + NADP(+). It carries out the reaction (2E)-decenoyl-[ACP] + NADPH + H(+) = decanoyl-[ACP] + NADP(+). The catalysed reaction is (2E)-dodecenoyl-[ACP] + NADPH + H(+) = dodecanoyl-[ACP] + NADP(+). It catalyses the reaction (2E)-tetradecenoyl-[ACP] + NADPH + H(+) = tetradecanoyl-[ACP] + NADP(+). The enzyme catalyses (2E)-hexadecenoyl-[ACP] + NADPH + H(+) = hexadecanoyl-[ACP] + NADP(+). Its function is as follows. Catalyzes the NADPH-dependent reduction of trans-2-enoyl thioesters in mitochondrial fatty acid synthesis (fatty acid synthesis type II). Fatty acid chain elongation in mitochondria uses acyl carrier protein (ACP) as an acyl group carrier, but the enzyme accepts both ACP and CoA thioesters as substrates in vitro. Displays a preference for medium-chain over short- and long-chain substrates. May provide the octanoyl chain used for lipoic acid biosynthesis, regulating protein lipoylation and mitochondrial respiratory activity particularly in Purkinje cells. Involved in iron homeostasis; affecting Fe-S cluster assembly and ceramide metabolism. Required for proper morphology and bioenergetic functions of mitochondria. Required for maintenance of neurons. This Bos taurus (Bovine) protein is Enoyl-[acyl-carrier-protein] reductase, mitochondrial (MECR).